Reading from the N-terminus, the 254-residue chain is DNA repair protein RecO (254 aa).

Belongs to the RecO family.

Functionally, involved in DNA repair and RecF pathway recombination. The chain is DNA repair protein RecO from Anaeromyxobacter sp. (strain K).